A 1186-amino-acid polypeptide reads, in one-letter code: Myelin transcription factor 1-like protein (1186 aa).

Residues 1-21 (MEVDTEEKRHRTRSKGVRVPV) are disordered. A CCHHC-type 1 zinc finger spans residues 22 to 65 (EPAIQELFSCPTPGCDGSGHVSGKYARHRSVYGCPLAKKRKTQD). Zn(2+) contacts are provided by Cys-31, Cys-36, His-49, and Cys-55. Disordered stretches follow at residues 56-175 (PLAK…QMNC) and 220-247 (RTES…GRKS). Residues 86–169 (SVDECDDSDG…EEEEEEEENE (84 aa)) are compositionally biased toward acidic residues. Ser-250 is subject to Phosphoserine. Disordered stretches follow at residues 342–372 (SETN…GRTP) and 449–513 (REKM…GCDG). Polar residues predominate over residues 343 to 357 (ETNPQERNPQQNMNI). 3 stretches are compositionally biased toward basic and acidic residues: residues 361-372 (VRPEEDFPGRTP), 449-487 (REKM…DSHV), and 495-505 (DPSRTEKKESK). CCHHC-type zinc fingers lie at residues 497-540 (SRTE…PPEI) and 541-584 (LAMH…KLAK). Zn(2+) contacts are provided by Cys-506, Cys-511, His-524, Cys-530, Cys-550, Cys-555, His-568, and Cys-574. Disordered regions lie at residues 659-709 (RAIA…GGGS) and 753-780 (KPQD…MNKQ). The span at 666–683 (QTRDISPKGYDDAKRYCK) shows a compositional bias: basic and acidic residues. The segment covering 685-709 (PSPSSSSTSSYAPSSSSNLSCGGGS) has biased composition (low complexity). 3 consecutive CCHHC-type zinc fingers follow at residues 896-939 (LATS…GIRI), 945-988 (DKED…QKDG), and 998-1041 (KSVK…MKKA). Zn(2+) is bound by residues Cys-905, Cys-910, His-923, Cys-929, Cys-954, Cys-959, His-972, Cys-978, Cys-1007, Cys-1012, His-1025, and Cys-1031. The stretch at 1056–1130 (SNGIENDEEI…LANLSQSLIH (75 aa)) forms a coiled coil.

Belongs to the MYT1 family. In terms of assembly, interacts with SIN3B.

It is found in the nucleus. The protein resides in the chromosome. Its function is as follows. Transcription factor that plays a key role in neuronal differentiation by specifically repressing expression of non-neuronal genes during neuron differentiation. In contrast to other transcription repressors that inhibit specific lineages, mediates repression of multiple differentiation programs. Also represses expression of negative regulators of neurogenesis, such as members of the Notch signaling pathway, including HES1. The combination of three transcription factors, ASCL1, POU3F2/BRN2 and MYT1L, is sufficient to reprogram fibroblasts and other somatic cells into induced neuronal (iN) cells in vitro. Directly binds the 5'-AAGTT-3' core motif present on the promoter of target genes and represses transcription by recruiting a multiprotein complex containing SIN3B. The 5'-AAGTT-3' core motif is absent from the promoter of neural genes. The sequence is that of Myelin transcription factor 1-like protein from Homo sapiens (Human).